We begin with the raw amino-acid sequence, 214 residues long: Transcription factor 23 (214 aa).

2 disordered regions span residues 1–86 (MSQR…ARER) and 174–214 (DSTT…LGDK). Residues 40–49 (TRQDPWEERS) are compositionally biased toward basic and acidic residues. Positions 76–128 (EASPENAARERSRVRTLRQAFLALQAALPAVPPDTKLSKLDVLVLAASYIAHL) constitute a bHLH domain. A compositionally biased stretch (polar residues) spans 174 to 183 (DSTTASTPSQ).

As to quaternary structure, forms inactive heterodimeric complexes with TCF3. In terms of tissue distribution, expressed in liver, kidney and spleen.

The protein localises to the nucleus. Inhibits E-box-mediated binding and transactivation of bHLH factors. Inhibitory effect is similar to that of ID proteins. Inhibits the formation of TCF3 and MYOD1 homodimers and heterodimers. Lacks DNA binding activity. Seems to play a role in the inhibition of myogenesis. This Homo sapiens (Human) protein is Transcription factor 23 (TCF23).